Here is a 99-residue protein sequence, read N- to C-terminus: Large ribosomal subunit protein uL23 (99 aa).

Belongs to the universal ribosomal protein uL23 family. Part of the 50S ribosomal subunit. Contacts protein L29, and trigger factor when it is bound to the ribosome.

Functionally, one of the early assembly proteins it binds 23S rRNA. One of the proteins that surrounds the polypeptide exit tunnel on the outside of the ribosome. Forms the main docking site for trigger factor binding to the ribosome. The sequence is that of Large ribosomal subunit protein uL23 from Pseudomonas aeruginosa (strain LESB58).